The sequence spans 342 residues: Isopentenyl-diphosphate delta-isomerase (342 aa).

12–13 (RK) contributes to the substrate binding site. Residues 71–73 (AMT), Ser-101, and Asn-129 contribute to the FMN site. 101–103 (SQR) is a binding site for substrate. Gln-163 lines the substrate pocket. Glu-164 lines the Mg(2+) pocket. FMN-binding positions include Lys-195, Thr-225, 272–274 (GIR), and 293–294 (AR).

This sequence belongs to the IPP isomerase type 2 family. In terms of assembly, homooctamer. Dimer of tetramers. Requires FMN as cofactor. The cofactor is NADPH. It depends on Mg(2+) as a cofactor.

The protein resides in the cytoplasm. The enzyme catalyses isopentenyl diphosphate = dimethylallyl diphosphate. Its function is as follows. Involved in the biosynthesis of isoprenoids. Catalyzes the 1,3-allylic rearrangement of the homoallylic substrate isopentenyl (IPP) to its allylic isomer, dimethylallyl diphosphate (DMAPP). The sequence is that of Isopentenyl-diphosphate delta-isomerase from Mycolicibacterium gilvum (strain PYR-GCK) (Mycobacterium gilvum (strain PYR-GCK)).